We begin with the raw amino-acid sequence, 335 residues long: uncharacterized protein (335 aa).

This is an uncharacterized protein from Schizosaccharomyces pombe (strain 972 / ATCC 24843) (Fission yeast).